Here is a 210-residue protein sequence, read N- to C-terminus: ATP phosphoribosyltransferase (210 aa).

It belongs to the ATP phosphoribosyltransferase family. Short subfamily. As to quaternary structure, heteromultimer composed of HisG and HisZ subunits.

The protein resides in the cytoplasm. It catalyses the reaction 1-(5-phospho-beta-D-ribosyl)-ATP + diphosphate = 5-phospho-alpha-D-ribose 1-diphosphate + ATP. It participates in amino-acid biosynthesis; L-histidine biosynthesis; L-histidine from 5-phospho-alpha-D-ribose 1-diphosphate: step 1/9. Functionally, catalyzes the condensation of ATP and 5-phosphoribose 1-diphosphate to form N'-(5'-phosphoribosyl)-ATP (PR-ATP). Has a crucial role in the pathway because the rate of histidine biosynthesis seems to be controlled primarily by regulation of HisG enzymatic activity. The protein is ATP phosphoribosyltransferase of Petrotoga mobilis (strain DSM 10674 / SJ95).